Consider the following 40-residue polypeptide: uncharacterized protein (40 aa).

A signal peptide spans 1–17; that stretch reads MAVAALAMYGGTCGACA.

This is an uncharacterized protein from Archaeoglobus fulgidus (strain ATCC 49558 / DSM 4304 / JCM 9628 / NBRC 100126 / VC-16).